A 2280-amino-acid polypeptide reads, in one-letter code: Protein Ycf2 (2280 aa).

1631-1638 (GSIGTGRS) provides a ligand contact to ATP.

This sequence belongs to the Ycf2 family.

The protein localises to the plastid. The protein resides in the chloroplast stroma. Functionally, probable ATPase of unknown function. Its presence in a non-photosynthetic plant (Epifagus virginiana) and experiments in tobacco indicate that it has an essential function which is probably not related to photosynthesis. The chain is Protein Ycf2 (ycf2-A) from Nicotiana tabacum (Common tobacco).